Consider the following 223-residue polypeptide: Lipoprotein signal peptidase (223 aa).

The disordered stretch occupies residues 1-20 (MNSAKVNPSGHAPTPAPTAS). 4 helical membrane passes run 32–52 (LFFG…EAIF), 65–85 (WIIE…VFGL), 91–111 (LVFA…LFFF), and 116–136 (SCWL…NLYD). Residues aspartate 156 and aspartate 175 contribute to the active site. Residues 173 to 193 (IADSLLVTGAIMLLVQSFFFP) form a helical membrane-spanning segment. A disordered region spans residues 196–223 (PHGEADGNELPGRRAPDEPTEGTKPAAS).

The protein belongs to the peptidase A8 family.

It localises to the cell inner membrane. The enzyme catalyses Release of signal peptides from bacterial membrane prolipoproteins. Hydrolyzes -Xaa-Yaa-Zaa-|-(S,diacylglyceryl)Cys-, in which Xaa is hydrophobic (preferably Leu), and Yaa (Ala or Ser) and Zaa (Gly or Ala) have small, neutral side chains.. It participates in protein modification; lipoprotein biosynthesis (signal peptide cleavage). Its function is as follows. This protein specifically catalyzes the removal of signal peptides from prolipoproteins. This chain is Lipoprotein signal peptidase, found in Rhodopirellula baltica (strain DSM 10527 / NCIMB 13988 / SH1).